A 397-amino-acid polypeptide reads, in one-letter code: Cytoplasmic tRNA 2-thiolation protein 2 (397 aa).

The protein belongs to the CTU2/NCS2 family.

It is found in the cytoplasm. Its pathway is tRNA modification; 5-methoxycarbonylmethyl-2-thiouridine-tRNA biosynthesis. In terms of biological role, plays a central role in 2-thiolation of mcm(5)S(2)U at tRNA wobble positions of tRNA(Lys), tRNA(Glu) and tRNA(Gln). May act by forming a heterodimer with NCS6/CTU1 that ligates sulfur from thiocarboxylated URM1 onto the uridine of tRNAs at wobble position. The sequence is that of Cytoplasmic tRNA 2-thiolation protein 2 from Drosophila grimshawi (Hawaiian fruit fly).